Reading from the N-terminus, the 681-residue chain is Potassium-transporting ATPase ATP-binding subunit 1 (681 aa).

Helical transmembrane passes span 30–50, 59–79, 216–236, and 255–275; these read LLVYVGAILATSLYFLGFFGI, LAIALILWFTVLFANFAEAIA, ILLVTLSIIFLAVSATLLPFT, and IALLVCLAPTTIGALLSSIGI. The active-site 4-aspartylphosphate intermediate is Asp-306. Residues Asp-343, Glu-347, 376-383, and Lys-394 contribute to the ATP site; that span reads FTATTRMS. Mg(2+) is bound by residues Asp-517 and Asp-521. 3 helical membrane passes run 587–607, 615–635, and 661–681; these read FAIIPVLFYGIFPQLEALNLM, AILSAIIYNAVIIIFLIPLSL, and LIAPFIAIKLIDMLLTVLGIV.

It belongs to the cation transport ATPase (P-type) (TC 3.A.3) family. Type IA subfamily. As to quaternary structure, the system is composed of three essential subunits: KdpA, KdpB and KdpC.

It localises to the cell membrane. The enzyme catalyses K(+)(out) + ATP + H2O = K(+)(in) + ADP + phosphate + H(+). In terms of biological role, part of the high-affinity ATP-driven potassium transport (or Kdp) system, which catalyzes the hydrolysis of ATP coupled with the electrogenic transport of potassium into the cytoplasm. This subunit is responsible for energy coupling to the transport system and for the release of the potassium ions to the cytoplasm. The sequence is that of Potassium-transporting ATPase ATP-binding subunit 1 from Listeria innocua serovar 6a (strain ATCC BAA-680 / CLIP 11262).